The following is a 425-amino-acid chain: Serine--tRNA ligase (425 aa).

230–232 contacts L-serine; the sequence is TAE. 261-263 is an ATP binding site; the sequence is RSE. Glutamate 284 lines the L-serine pocket. 348–351 lines the ATP pocket; the sequence is EISS. Serine 384 is an L-serine binding site.

This sequence belongs to the class-II aminoacyl-tRNA synthetase family. Type-1 seryl-tRNA synthetase subfamily. Homodimer. The tRNA molecule binds across the dimer.

The protein localises to the cytoplasm. It carries out the reaction tRNA(Ser) + L-serine + ATP = L-seryl-tRNA(Ser) + AMP + diphosphate + H(+). The catalysed reaction is tRNA(Sec) + L-serine + ATP = L-seryl-tRNA(Sec) + AMP + diphosphate + H(+). The protein operates within aminoacyl-tRNA biosynthesis; selenocysteinyl-tRNA(Sec) biosynthesis; L-seryl-tRNA(Sec) from L-serine and tRNA(Sec): step 1/1. Catalyzes the attachment of serine to tRNA(Ser). Is also able to aminoacylate tRNA(Sec) with serine, to form the misacylated tRNA L-seryl-tRNA(Sec), which will be further converted into selenocysteinyl-tRNA(Sec). In Streptococcus pyogenes serotype M12 (strain MGAS2096), this protein is Serine--tRNA ligase.